The sequence spans 229 residues: Transcriptional activator protein IrlR (229 aa).

The region spanning 2-115 (RILIVEDEPK…ELVARVRSIL (114 aa)) is the Response regulatory domain. Asp-51 is modified (4-aspartylphosphate). Positions 123–221 (STVLRIADLE…VRGMGYVLEV (99 aa)) form a DNA-binding region, ompR/PhoB-type.

Phosphorylated by IrlS.

Member of the two-component regulatory system IrlR/IrlS. May be involved in invasion of eukaryotic cells and heavy-metal resistance. This is Transcriptional activator protein IrlR (irlR) from Burkholderia pseudomallei (strain 1026b).